The primary structure comprises 634 residues: Factor of DNA methylation 1 (634 aa).

Residues 288 to 469 (LDEKKNLHQA…LESMNSVLMT (182 aa)) adopt a coiled-coil conformation. Over residues 349 to 364 (ELDRQKLDEDKRKSDA) the composition is skewed to basic and acidic residues. The disordered stretch occupies residues 349 to 375 (ELDRQKLDEDKRKSDAMNKSLQLASRE).

As to quaternary structure, homodimer. Interacts with IDN2 and AGO4. Forms a complex with IDN2 and FMD2/INDL2. As to expression, highly expressed in flowers and at lower levels in roots, leaves and stems.

Its function is as follows. Forms a complex with IDN2 and FDM2/IDNL2 that is required for RNA-directed DNA methylation (RdDM) and that functions at a downstream step of the RdDM pathway. Required for de novo DNA methylation and 24 nucleotide small interfering RNA (siRNA) accumulation. Binds unmethylated but not methylated DNAs through its coiled-coil domain. May bind double-stranded RNAs (dsRNAs) with 5'-overhangs through its XS domain. However, according to, FMD1 does not bind dsRNAs. This Arabidopsis thaliana (Mouse-ear cress) protein is Factor of DNA methylation 1.